Consider the following 246-residue polypeptide: Electron transfer flavoprotein beta subunit lysine methyltransferase (246 aa).

Belongs to the methyltransferase superfamily. ETFBKMT family.

The protein resides in the cytoplasm. It localises to the mitochondrion matrix. It carries out the reaction L-lysyl-[protein] + 3 S-adenosyl-L-methionine = N(6),N(6),N(6)-trimethyl-L-lysyl-[protein] + 3 S-adenosyl-L-homocysteine + 3 H(+). Protein-lysine methyltransferase that selectively trimethylates the flavoprotein ETFB in mitochondria. Thereby, may negatively regulate the function of ETFB in electron transfer from Acyl-CoA dehydrogenases to the main respiratory chain. The chain is Electron transfer flavoprotein beta subunit lysine methyltransferase (etfbkmt) from Xenopus laevis (African clawed frog).